Here is a 165-residue protein sequence, read N- to C-terminus: Phosphopantetheine adenylyltransferase (165 aa).

Substrate is bound at residue Ser9. Residues 9–10 and His17 contribute to the ATP site; that span reads SF. Positions 41, 75, and 89 each coordinate substrate. ATP is bound by residues 90–92, Glu100, and 125–131; these read GVR and YLFVRSD.

Belongs to the bacterial CoaD family. As to quaternary structure, homohexamer. The cofactor is Mg(2+).

The protein resides in the cytoplasm. The catalysed reaction is (R)-4'-phosphopantetheine + ATP + H(+) = 3'-dephospho-CoA + diphosphate. It functions in the pathway cofactor biosynthesis; coenzyme A biosynthesis; CoA from (R)-pantothenate: step 4/5. In terms of biological role, reversibly transfers an adenylyl group from ATP to 4'-phosphopantetheine, yielding dephospho-CoA (dPCoA) and pyrophosphate. The protein is Phosphopantetheine adenylyltransferase of Borrelia duttonii (strain Ly).